We begin with the raw amino-acid sequence, 1145 residues long: Major DNA-binding protein (1145 aa).

Positions 1115 to 1145 (APQAAAPQYSGSSSVAGKKRKANVILGDLDL) are required for nuclear localization.

The protein belongs to the herpesviridae major DNA-binding protein family. Homooligomers. Forms double-helical filaments necessary for the formation of replication compartments within the host nucleus. Interacts with the origin-binding protein. Interacts with the helicase primase complex; this interaction stimulates primer synthesis activity of the helicase-primase complex. Interacts with the DNA polymerase. Interacts with the alkaline exonuclease; this interaction increases its nuclease processivity.

It is found in the host nucleus. In terms of biological role, plays several crucial roles in viral infection. Participates in the opening of the viral DNA origin to initiate replication by interacting with the origin-binding protein. May disrupt loops, hairpins and other secondary structures present on ssDNA to reduce and eliminate pausing of viral DNA polymerase at specific sites during elongation. Promotes viral DNA recombination by performing strand-transfer, characterized by the ability to transfer a DNA strand from a linear duplex to a complementary single-stranded DNA circle. Can also catalyze the renaturation of complementary single strands. Additionally, reorganizes the host cell nucleus, leading to the formation of prereplicative sites and replication compartments. This process is driven by the protein which can form double-helical filaments in the absence of DNA. The sequence is that of Major DNA-binding protein from Equus caballus (Horse).